The sequence spans 465 residues: L-seryl-tRNA(Sec) selenium transferase (465 aa).

An N6-(pyridoxal phosphate)lysine modification is found at Lys294.

This sequence belongs to the SelA family. It depends on pyridoxal 5'-phosphate as a cofactor.

The protein localises to the cytoplasm. The catalysed reaction is L-seryl-tRNA(Sec) + selenophosphate + H(+) = L-selenocysteinyl-tRNA(Sec) + phosphate. The protein operates within aminoacyl-tRNA biosynthesis; selenocysteinyl-tRNA(Sec) biosynthesis; selenocysteinyl-tRNA(Sec) from L-seryl-tRNA(Sec) (bacterial route): step 1/1. Its function is as follows. Converts seryl-tRNA(Sec) to selenocysteinyl-tRNA(Sec) required for selenoprotein biosynthesis. In Maridesulfovibrio salexigens (strain ATCC 14822 / DSM 2638 / NCIMB 8403 / VKM B-1763) (Desulfovibrio salexigens), this protein is L-seryl-tRNA(Sec) selenium transferase.